We begin with the raw amino-acid sequence, 283 residues long: Putative 4-diphosphocytidyl-2-C-methyl-D-erythritol kinase (283 aa).

The active site involves Lys11. Position 95–105 (Pro95–Ser105) interacts with ATP. Asp137 is a catalytic residue.

The protein belongs to the GHMP kinase family. IspE subfamily.

It carries out the reaction 4-CDP-2-C-methyl-D-erythritol + ATP = 4-CDP-2-C-methyl-D-erythritol 2-phosphate + ADP + H(+). In terms of biological role, catalyzes the phosphorylation of the position 2 hydroxy group of 4-diphosphocytidyl-2C-methyl-D-erythritol. The chain is Putative 4-diphosphocytidyl-2-C-methyl-D-erythritol kinase from Streptococcus equi subsp. equi (strain 4047).